Here is a 161-residue protein sequence, read N- to C-terminus: Allophycocyanin subunit alpha-B (161 aa).

N71 is subject to N4-methylasparagine. A (2R,3E)-phycocyanobilin-binding site is contributed by C81.

This sequence belongs to the phycobiliprotein family. As to quaternary structure, heterohexamer of two alpha chains, one alpha-B chain and three beta chains. In terms of processing, contains one covalently linked phycocyanobilin chromophore. The chromophore is added by phycocyanobilin lyase CpcS 1.

The protein localises to the cellular thylakoid membrane. Light-harvesting photosynthetic bile pigment-protein from the phycobiliprotein complex. Allophycocyanin has a maximum absorption at approximately 654 nanometers. This Nostoc sp. (strain PCC 7120 / SAG 25.82 / UTEX 2576) protein is Allophycocyanin subunit alpha-B (apcD).